A 324-amino-acid polypeptide reads, in one-letter code: Methionyl-tRNA formyltransferase (324 aa).

Residue 109–112 (SILP) coordinates (6S)-5,6,7,8-tetrahydrofolate.

Belongs to the Fmt family.

It carries out the reaction L-methionyl-tRNA(fMet) + (6R)-10-formyltetrahydrofolate = N-formyl-L-methionyl-tRNA(fMet) + (6S)-5,6,7,8-tetrahydrofolate + H(+). Attaches a formyl group to the free amino group of methionyl-tRNA(fMet). The formyl group appears to play a dual role in the initiator identity of N-formylmethionyl-tRNA by promoting its recognition by IF2 and preventing the misappropriation of this tRNA by the elongation apparatus. The chain is Methionyl-tRNA formyltransferase from Acidothermus cellulolyticus (strain ATCC 43068 / DSM 8971 / 11B).